A 413-amino-acid chain; its full sequence is Serine hydroxymethyltransferase (413 aa).

(6S)-5,6,7,8-tetrahydrofolate contacts are provided by residues Leu119 and 123 to 125 (GHL). Lys228 carries the N6-(pyridoxal phosphate)lysine modification. 351 to 353 (SPF) provides a ligand contact to (6S)-5,6,7,8-tetrahydrofolate.

This sequence belongs to the SHMT family. As to quaternary structure, homodimer. It depends on pyridoxal 5'-phosphate as a cofactor.

It is found in the cytoplasm. The enzyme catalyses (6R)-5,10-methylene-5,6,7,8-tetrahydrofolate + glycine + H2O = (6S)-5,6,7,8-tetrahydrofolate + L-serine. It participates in one-carbon metabolism; tetrahydrofolate interconversion. Its pathway is amino-acid biosynthesis; glycine biosynthesis; glycine from L-serine: step 1/1. Its function is as follows. Catalyzes the reversible interconversion of serine and glycine with tetrahydrofolate (THF) serving as the one-carbon carrier. This reaction serves as the major source of one-carbon groups required for the biosynthesis of purines, thymidylate, methionine, and other important biomolecules. Also exhibits THF-independent aldolase activity toward beta-hydroxyamino acids, producing glycine and aldehydes, via a retro-aldol mechanism. In Anoxybacillus flavithermus (strain DSM 21510 / WK1), this protein is Serine hydroxymethyltransferase.